Here is a 2897-residue protein sequence, read N- to C-terminus: Chromodomain-helicase-DNA-binding protein 9 (2897 aa).

A compositionally biased stretch (polar residues) spans 173-201 (QCTSLRSQQNRNNLNPGQNSLSQSKNFMN). Disordered regions lie at residues 173–265 (QCTS…CSVS), 482–525 (QRQP…KQEK), and 537–671 (AKER…SAPL). A Glycyl lysine isopeptide (Lys-Gly) (interchain with G-Cter in SUMO2) cross-link involves residue Lys-197. Residues 220–235 (SNSQQSISMQQFSQTS) are compositionally biased toward low complexity. Composition is skewed to polar residues over residues 247 to 260 (HQEGNFNGPSPNMT) and 484 to 506 (QPPSSKKSDGSGTYTKLQNTQVR). Lys-499 bears the N6-acetyllysine mark. Residues 508 to 525 (MSEKKQRKKVESESKQEK) are compositionally biased toward basic and acidic residues. The residue at position 550 (Ser-550) is a Phosphoserine. The segment covering 573-593 (KPKDKDSKKTKTCSKLKEKTK) has biased composition (basic and acidic residues). Lys-596 is covalently cross-linked (Glycyl lysine isopeptide (Lys-Gly) (interchain with G-Cter in SUMO2)). Ser-611 bears the Phosphoserine mark. Positions 634–644 (RRSNRQIKRKK) are enriched in basic residues. Over residues 645 to 660 (YAEDIEGKQSEEEVKG) the composition is skewed to basic and acidic residues. Chromo domains are found at residues 690 to 761 (AIVD…HFFA) and 773 to 839 (VEVD…RLDR). The LXXLL motif 1 signature appears at 868 to 872 (LNWLL). Residues 872 to 1046 (LFNWYNRRNC…FSLLHFLEPL (175 aa)) form the Helicase ATP-binding domain. Residue 885 to 892 (DEMGLGKT) participates in ATP binding. Residues 997–1000 (DEAH) carry the DEAH box motif. The LXXLL motif 2 motif lies at 1036 to 1040 (LFSLL). A Helicase C-terminal domain is found at 1186-1337 (LIDKLLPKMK…KAVLQSMSGR (152 aa)). The tract at residues 1461–1484 (KDELAELSEAESEGDEKPKLRRPC) is disordered. Positions 1465-1474 (AELSEAESEG) are enriched in acidic residues. Residues Ser-1468 and Ser-1472 each carry the phosphoserine modification. Positions 1475 to 1484 (DEKPKLRRPC) are enriched in basic and acidic residues. Glycyl lysine isopeptide (Lys-Gly) (interchain with G-Cter in SUMO2) cross-links involve residues Lys-1588, Lys-1738, and Lys-1903. Ser-2026 carries the phosphoserine modification. Residues 2031–2035 (LPRLL) carry the LXXLL motif 3 motif. Lys-2038 participates in a covalent cross-link: Glycyl lysine isopeptide (Lys-Gly) (interchain with G-Cter in SUMO2). 2 disordered regions span residues 2050–2238 (ENLK…QMNN) and 2305–2337 (GAATEYSDPSVPTPPGAGVKEEHDQSTQMSKVK). Ser-2058 and Ser-2059 each carry phosphoserine. A Glycyl lysine isopeptide (Lys-Gly) (interchain with G-Cter in SUMO2) cross-link involves residue Lys-2074. Ser-2075 and Ser-2079 each carry phosphoserine. Residues 2094–2104 (SGGKCETDRRM) are compositionally biased toward basic and acidic residues. The span at 2141–2193 (SSCSSRSSSSSSSSSCSHSRSGSSSSSSSSCSSASSSSSSSTSSSSSSSSSSS) shows a compositional bias: low complexity. Residues 2203–2216 (AQKRESTTHMKAYD) are compositionally biased toward basic and acidic residues. Residues 2221-2238 (ASLSTTQDETQDSFQMNN) are compositionally biased toward polar residues. Positions 2332–2481 (QMSKVKKHVR…LSYTQPQGIP (150 aa)) are binds A/T-rich DNA. Glycyl lysine isopeptide (Lys-Gly) (interchain with G-Cter in SUMO2) cross-links involve residues Lys-2350, Lys-2356, and Lys-2361. An a.T hook-like region spans residues 2429–2436 (KKRRGRRK). The short motif at 2721-2725 (LPNLL) is the LXXLL motif 4 element. The tract at residues 2729 to 2777 (GLLTKPTESGTEDKKGSDSKESEGKTERTESQSSENGGENSVSSSPSTS) is disordered. Residues 2739 to 2758 (TEDKKGSDSKESEGKTERTE) are compositionally biased toward basic and acidic residues. Residues 2759 to 2777 (SQSSENGGENSVSSSPSTS) show a composition bias toward low complexity. The short motif at 2793–2797 (LNPLL) is the LXXLL motif 5 element. The interval 2827–2897 (VQNKNSDLGS…SEDSDSSNED (71 aa)) is disordered. Positions 2840-2857 (VEVKEEDSRIKDQEDKGG) are enriched in basic and acidic residues. Lys-2843 is covalently cross-linked (Glycyl lysine isopeptide (Lys-Gly) (interchain with G-Cter in SUMO2)). The span at 2877–2888 (ASSGSDSTSSSS) shows a compositional bias: low complexity.

This sequence belongs to the SNF2/RAD54 helicase family. In terms of assembly, interacts with PPARA. Probably interacts with ESR1 and NR1I3. Phosphorylated on serine and tyrosine residues. As to expression, widely expressed at low levels. In bone marrow, expression is restricted to osteoprogenitor cells adjacent to mature osteoblasts.

The protein resides in the cytoplasm. It localises to the nucleus. The catalysed reaction is ATP + H2O = ADP + phosphate + H(+). Its function is as follows. Probable ATP-dependent chromatin-remodeling factor. Acts as a transcriptional coactivator for PPARA and possibly other nuclear receptors. Has DNA-dependent ATPase activity and binds to A/T-rich DNA. Associates with A/T-rich regulatory regions in promoters of genes that participate in the differentiation of progenitors during osteogenesis. In Homo sapiens (Human), this protein is Chromodomain-helicase-DNA-binding protein 9 (CHD9).